Here is a 613-residue protein sequence, read N- to C-terminus: Dihydroxy-acid dehydratase (613 aa).

Asp-81 is a binding site for Mg(2+). Cys-122 provides a ligand contact to [2Fe-2S] cluster. 2 residues coordinate Mg(2+): Asp-123 and Lys-124. Lys-124 carries the post-translational modification N6-carboxylysine. Cys-195 is a binding site for [2Fe-2S] cluster. Mg(2+) is bound at residue Glu-491. The Proton acceptor role is filled by Ser-517.

The protein belongs to the IlvD/Edd family. Homodimer. [2Fe-2S] cluster serves as cofactor. Mg(2+) is required as a cofactor.

It carries out the reaction (2R)-2,3-dihydroxy-3-methylbutanoate = 3-methyl-2-oxobutanoate + H2O. The enzyme catalyses (2R,3R)-2,3-dihydroxy-3-methylpentanoate = (S)-3-methyl-2-oxopentanoate + H2O. It functions in the pathway amino-acid biosynthesis; L-isoleucine biosynthesis; L-isoleucine from 2-oxobutanoate: step 3/4. Its pathway is amino-acid biosynthesis; L-valine biosynthesis; L-valine from pyruvate: step 3/4. Functions in the biosynthesis of branched-chain amino acids. Catalyzes the dehydration of (2R,3R)-2,3-dihydroxy-3-methylpentanoate (2,3-dihydroxy-3-methylvalerate) into 2-oxo-3-methylpentanoate (2-oxo-3-methylvalerate) and of (2R)-2,3-dihydroxy-3-methylbutanoate (2,3-dihydroxyisovalerate) into 2-oxo-3-methylbutanoate (2-oxoisovalerate), the penultimate precursor to L-isoleucine and L-valine, respectively. This Vibrio parahaemolyticus serotype O3:K6 (strain RIMD 2210633) protein is Dihydroxy-acid dehydratase.